Here is a 320-residue protein sequence, read N- to C-terminus: Stress-induced-phosphoprotein 1 (320 aa).

6 TPR repeats span residues 5 to 38, 40 to 72, 80 to 113, 140 to 173, 175 to 207, and 208 to 241; these read AIAE…DPSN, TFYN…GRET, AKAM…FRDP, AQEE…DPEN, ILYS…DSKF, and IKGY…DPSN. The disordered stretch occupies residues 241-269; it reads NEEAREGVRNCLRSNDEDPEKAKERSLAD. The segment covering 242–269 has biased composition (basic and acidic residues); that stretch reads EEAREGVRNCLRSNDEDPEKAKERSLAD. One can recognise an STI1 domain in the interval 269 to 308; it reads DPEVQEILRDPGMRMILEQMSNDPGAVREHLKNPEIFQKL.

As to quaternary structure, forms a complex with hsp-1/hsp70 and daf-21/hsp90. Interacts with daf-21/hsp90 (via the C-terminal MEEVD pentapeptide). In terms of tissue distribution, expressed ubiquitously in the whole body. Detected predominantly in the pharyngeal muscles, vulva epithelial cells, striated body-wall muscles, spermathecae and intestinal cell ring. Also observed in the tail regions of hermaphrodite and in the sensory rays and spicules of males.

It localises to the cytoplasm. Plays a role in gonad development. Up-regulates longevity and thermotolerance. Binds daf-21/hsp90 and inhibits its ATPase activity. This chain is Stress-induced-phosphoprotein 1, found in Caenorhabditis elegans.